Reading from the N-terminus, the 282-residue chain is uncharacterized protein (282 aa).

5 helical membrane passes run 9-29, 43-63, 123-143, 158-178, and 232-252; these read LLKIFVVGVFPCTLFVNAPHG, ISGRVGWVLMELVAPLTFLYA, VFVSAVLFNFLNGMSIGLYLV, YIGMFLWLMGWLGNMYHDNIL, and LAAGPSAEPFWWFFLSEILLM.

It belongs to the steroid 5-alpha reductase family.

The protein localises to the endoplasmic reticulum membrane. This is an uncharacterized protein from Schizosaccharomyces pombe (strain 972 / ATCC 24843) (Fission yeast).